A 237-amino-acid chain; its full sequence is Nodulation protein NolA (237 aa).

In terms of domain architecture, HTH merR-type spans 10–79; the sequence is RWRIGELAGA…LQEIRRAMDG (70 aa). The H-T-H motif DNA-binding region spans 13–32; sequence IGELAGATGVTVRTLHHYEH.

Involved in genotype-specific nodulation of soybeans. This chain is Nodulation protein NolA (nolA), found in Bradyrhizobium sp. (strain NC92).